The sequence spans 127 residues: Trefoil factor 2 (127 aa).

The N-terminal stretch at 1 to 21 (EPQRPAPGHPPPAGAVCLTGA) is a signal peptide. Position 22 is a pyrrolidone carboxylic acid (glutamine 22). P-type domains lie at 27–71 (CRCS…FKPL) and 77–120 (EECV…FFPM). 7 disulfide bridges follow: cysteine 27/cysteine 125, cysteine 29/cysteine 56, cysteine 40/cysteine 55, cysteine 50/cysteine 67, cysteine 79/cysteine 105, cysteine 89/cysteine 104, and cysteine 99/cysteine 116.

Found in pancreas.

Its subcellular location is the secreted. In terms of biological role, inhibits gastrointestinal motility and gastric acid secretion. Could function as a structural component of gastric mucus, possibly by stabilizing glycoproteins in the mucus gel through interactions with carbohydrate side chains. The chain is Trefoil factor 2 (TFF2) from Sus scrofa (Pig).